The primary structure comprises 58 residues: UPF0391 membrane protein Maqu_2901 (58 aa).

A run of 2 helical transmembrane segments spans residues 4-24 (WAIV…GGIA) and 28-48 (AGFA…SLVV).

The protein belongs to the UPF0391 family.

The protein resides in the cell membrane. This Marinobacter nauticus (strain ATCC 700491 / DSM 11845 / VT8) (Marinobacter aquaeolei) protein is UPF0391 membrane protein Maqu_2901.